The following is a 443-amino-acid chain: Glutamate-rich protein 1 (443 aa).

Lys12 is modified (N6-acetyllysine). Positions Gln15–Thr333 are disordered. The span at Val42–Pro54 shows a compositional bias: basic and acidic residues. The segment covering Ser87–Gly97 has biased composition (polar residues). Composition is skewed to basic residues over residues Pro109–Lys124 and Lys159–Ala176. Residues Ala205–Val226 show a composition bias toward acidic residues. A phosphoserine mark is found at Ser238 and Ser254. The segment covering Gly250–Val266 has biased composition (acidic residues). A Phosphothreonine modification is found at Thr277. Residues Asp281–Glu296 show a composition bias toward basic and acidic residues. The segment covering Asp297–Ile332 has biased composition (acidic residues).

The protein is Glutamate-rich protein 1 (ERICH1) of Homo sapiens (Human).